The primary structure comprises 794 residues: Protein sel-1 homolog 1 (794 aa).

Positions 1-21 (MQVRVRLLLLLCAVLLGSAAA) are cleaved as a signal peptide. Residues 22–737 (SSDEETNQDE…DLFTQLDMDQ (716 aa)) are interaction with ERLEC1, OS9 and SYVN1. The Lumenal portion of the chain corresponds to 22-738 (SSDEETNQDE…LFTQLDMDQL (717 aa)). The segment covering 23-32 (SDEETNQDES) has biased composition (acidic residues). Disordered regions lie at residues 23–46 (SDEETNQDESLDSKGALPTDGSVK) and 73–105 (QDEEESSKSQEEVSVTEDISFLDSPNPSSKTYE). Residues 122–170 (AHGEPCHFPFLFLDKEYDECTSDGREDGRLWCATTYDYKTDEKWGFCET) enclose the Fibronectin type-II domain. Cystine bridges form between cysteine 127-cysteine 153 and cysteine 141-cysteine 168. Sel1-like repeat units follow at residues 183 to 218 (AEAIYQSGMKILNGSTRKNQKREAYRYLQKAAGMNH), 219 to 254 (TKALERVSYALLFGDYLTQNIQAAKEMFEKLTEEGS), 255 to 290 (PKGQTGLGFLYASGLGVNSSQAKALVYYTFGALGGN), 291 to 326 (LIAHMVLGYRYWAGIGVLQSCESALTHYRLVANHVA), 373 to 409 (VQAQVGLGQLHLHGGRGVEQNHQRAFDYFNLAANAGN), 410 to 446 (SHAMAFLGKMYSEGSDIVPQSNETALHYFKKAADMGN), 447 to 482 (PVGQSGLGMAYLYGRGVQVNYDLALKYFQKAAEQGW), 483 to 518 (VDGQLQLGSMYYNGIGVKRDYKQALKYFNLASQGGH), and 519 to 554 (ILAFYNLAQMHASGTGVMRSCHTAVELFKNVCERGR). Asparagine 195 and asparagine 217 each carry an N-linked (GlcNAc...) asparagine glycan. N-linked (GlcNAc...) asparagine glycosylation is present at asparagine 272. The interval 352 to 537 (NSGMLEEDLI…MHASGTGVMR (186 aa)) is important for homodimerization and oligomerization. Asparagine 431 is a glycosylation site (N-linked (GlcNAc...) asparagine). Residue asparagine 608 is glycosylated (N-linked (GlcNAc...) asparagine). 2 Sel1-like repeats span residues 627–662 (TVARIKLGDYHFYGFGTDVDYETAFIHYRLASEQQH) and 664–699 (AQAMFNLGYMHEKGLGIKQDIHLAKRFYDMAAEASP). The segment at 643 to 723 (TDVDYETAFI…VVYFLQYIRE (81 aa)) is interaction with SYVN1. The segment at 738 to 794 (LLGPEWDLYLMTIIALLLGTVIAYRQRQHQDIPVPRPPGPRPAPPQQEGPPEQQPPQ) is mediates retention in the endoplasmic reticulum. A helical transmembrane segment spans residues 739–759 (LGPEWDLYLMTIIALLLGTVI). Residues 760–794 (AYRQRQHQDIPVPRPPGPRPAPPQQEGPPEQQPPQ) are Cytoplasmic-facing. The interval 767–794 (QDIPVPRPPGPRPAPPQQEGPPEQQPPQ) is disordered. Positions 771-794 (VPRPPGPRPAPPQQEGPPEQQPPQ) are enriched in pro residues.

It belongs to the sel-1 family. As to quaternary structure, homodimer and homooligomer. May form a complex with ERLEC1, HSPA5, OS9, and SYVN1. Interacts with FOXRED2 and EDEM1. Interacts with LPL and LMF1; may stabilize the complex formed by LPL and LMF1 and thereby promote the export of LPL dimers. Component of the HRD1 complex, which comprises at least SYNV1/HRD1, DERL1/2, FAM8A1, HERPUD1/HERP, OS9, SEL1L and UBE2J1. SYNV1 assembles with SEL1L and FAM8A1 through its transmembrane domains, but interaction with its cytoplasmic domain is required to confer stability to FAM8A1 and enhance recruitment of HERPUD1. The interaction with SYNV1/HRD1 is direct. In terms of processing, N-glycosylated.

It is found in the endoplasmic reticulum membrane. Functionally, plays a role in the endoplasmic reticulum quality control (ERQC) system also called ER-associated degradation (ERAD) involved in ubiquitin-dependent degradation of misfolded endoplasmic reticulum proteins. Enhances SYVN1 stability. Plays a role in LPL maturation and secretion. Required for normal differentiation of the pancreas epithelium, and for normal exocrine function and survival of pancreatic cells. May play a role in Notch signaling. This Rattus norvegicus (Rat) protein is Protein sel-1 homolog 1 (Sel1l).